The chain runs to 396 residues: Alpha-galactosidase 2 (396 aa).

Positions Met-1–Gly-25 are cleaved as a signal peptide. 2 cysteine pairs are disulfide-bonded: Cys-52–Cys-84 and Cys-132–Cys-163. A glycan (N-linked (GlcNAc...) asparagine) is linked at Asn-55. Residues Asp-82 to Asp-83 and Lys-159 contribute to the substrate site. Asp-161 acts as the Nucleophile in catalysis. Residues Glu-194–Glu-198, Arg-212, and Asp-216 contribute to the substrate site. The active-site Proton donor is Asp-216. Residues Asn-343 and Asn-354 are each glycosylated (N-linked (GlcNAc...) asparagine).

The protein belongs to the glycosyl hydrolase 27 family. As to quaternary structure, homodimer.

It is found in the secreted. The protein localises to the cell wall. Its subcellular location is the extracellular space. It localises to the apoplast. It carries out the reaction Hydrolysis of terminal, non-reducing alpha-D-galactose residues in alpha-D-galactosides, including galactose oligosaccharides, galactomannans and galactolipids.. Functionally, may regulate leaf (and possibly other organ) development by functioning in cell wall loosening and cell wall expansion. The chain is Alpha-galactosidase 2 from Arabidopsis thaliana (Mouse-ear cress).